The sequence spans 31 residues: U14-ctenitoxin-Co1c (31 aa).

Expressed by the venom gland.

It localises to the secreted. In terms of biological role, not toxic to mice by intracerebroventricular injection. This is U14-ctenitoxin-Co1c from Ctenus ornatus (Brazilian spider).